The primary structure comprises 92 residues: Small ribosomal subunit protein uS19c (92 aa).

This sequence belongs to the universal ribosomal protein uS19 family.

The protein resides in the plastid. Its subcellular location is the chloroplast. In terms of biological role, protein S19 forms a complex with S13 that binds strongly to the 16S ribosomal RNA. The protein is Small ribosomal subunit protein uS19c of Daucus carota (Wild carrot).